The following is a 1553-amino-acid chain: Sodium channel protein PaFPC1 (1553 aa).

Residues 1-68 (MADNSPLIRE…SAHPDQALEQ (68 aa)) form a disordered region. Over 1–140 (MADNSPLIRE…RVAISTMVQP (140 aa)) the chain is Cytoplasmic. The segment covering 34–60 (ENGKTEENKDNSRDKGRGANKDRDGSA) has biased composition (basic and acidic residues). The chain crosses the membrane as a helical span at residues 141-159 (IFSYFIMITILIHCIFMIM). The Extracellular segment spans residues 160–165 (PATQTT). A helical membrane pass occupies residues 166–186 (YILELVFLSIYTIEVVVKVLA). The Cytoplasmic portion of the chain corresponds to 187–200 (RGFILHPFAYLRDP). Residues 201 to 218 (WNWLDFLVTLIGYITLVV) form a helical membrane-spanning segment. The Extracellular portion of the chain corresponds to 219–224 (DLGHLY). A helical membrane pass occupies residues 225-241 (ALRAFRVLRSWRTVTIV). The Cytoplasmic segment spans residues 242–260 (PGWRTIVDALSLSITSLKD). Residues 261-280 (LVLLLLFSLFVFAVLGLQIY) form a helical membrane-spanning segment. The Extracellular portion of the chain corresponds to 281–360 (MGVLTQKCVK…PNYGYTSFDT (80 aa)). Intrachain disulfides connect C288/C337 and C328/C343. 4 N-linked (GlcNAc...) asparagine glycosylation sites follow: N300, N308, N312, and N330. Residues 361-385 (FGWAFLSVFRLVTLDYWEDLYQLAL) constitute an intramembrane region (pore-forming). E378 provides a ligand contact to saxitoxin. At 386-392 (RSAGPWH) the chain is on the extracellular side. The helical transmembrane segment at 393 to 413 (ILFFIIVVFYGTFCFLNFILA) threads the bilayer. Residues 414–519 (VVVMSYTHMV…GAIGAVVLSP (106 aa)) are Cytoplasmic-facing. A helical transmembrane segment spans residues 520–538 (FFELFIAVIIVLNITFMAL). Over 539 to 549 (DHHDMNIEFER) the chain is Extracellular. A helical membrane pass occupies residues 550 to 569 (ILRTGNYIFTSIYIVEAVLK). Residues 570 to 583 (IIALSPKFYFKDSW) lie on the Cytoplasmic side of the membrane. Residues 584 to 603 (NVFDFIIVVFAILELGLEGV) form a helical membrane-spanning segment. Residues 604 to 605 (QG) lie on the Extracellular side of the membrane. Residues 606–623 (LSVFRSFRLLRVFRLAKF) traverse the membrane as a helical segment. The Cytoplasmic portion of the chain corresponds to 624 to 639 (WPTLNNFMSVMTKSYG). Residues 640–658 (AFVNVMYVMFLLLFIFAII) traverse the membrane as a helical segment. The Extracellular portion of the chain corresponds to 659–686 (GMQLFGMNYIDNMERFPDGDLPRWNFTD). N683 is a glycosylation site (N-linked (GlcNAc...) asparagine). Residues 687–707 (FLHSFMIVFRALCGEWIESMW) constitute an intramembrane region (pore-forming). Residues E701 and E704 each coordinate tetrodotoxin. Residue E704 coordinates saxitoxin. At 708–719 (DCMLVGDWSCIP) the chain is on the extracellular side. Cysteines 709 and 717 form a disulfide. The helical transmembrane segment at 720-740 (FFVAVFFVGNLVILNLLIALL) threads the bilayer. The Cytoplasmic portion of the chain corresponds to 741–857 (LNNYGSFCTS…VCFLLAKNKY (117 aa)). Residues 858–875 (FQKFVTAVLVITSVLLAL) form a helical membrane-spanning segment. Residues 876-888 (EDIYLPQRPVLVN) lie on the Extracellular side of the membrane. The chain crosses the membrane as a helical span at residues 889 to 907 (ITLYVDYVLTAFFVIEMII). At 908 to 921 (MLFAVGFKKYFTSK) the chain is on the cytoplasmic side. Residues 922-940 (WYWLDFIVVVAYLLNFVLM) traverse the membrane as a helical segment. Topologically, residues 941–945 (CAGIE) are extracellular. The helical transmembrane segment at 946–964 (ALQTLRLLRVFRLFRPLSK) threads the bilayer. Residues 965–981 (VNGMQVVTSTLVEAVPH) lie on the Cytoplasmic side of the membrane. A helical membrane pass occupies residues 982–1001 (IFNVILVGIFFWLVFAIMGV). At 1002–1047 (QLFAGKFYKCVDENSTVLSHEITMDRNDCLHENYTWENSPMNFDHV) the chain is on the extracellular side. A disulfide bond links C1011 and C1030. N1015 carries N-linked (GlcNAc...) asparagine glycosylation. N-linked (GlcNAc...) asparagine; atypical glycosylation occurs at N1028. N-linked (GlcNAc...) asparagine glycosylation occurs at N1034. The pore-forming intramembrane region spans 1048-1069 (GNAYLSLLQVATFKGWLQIMND). A tetrodotoxin-binding site is contributed by G1062. Residue W1063 participates in saxitoxin binding. The Extracellular segment spans residues 1070–1086 (AIDSREVHKQPIRETNI). The chain crosses the membrane as a helical span at residues 1087-1108 (YMYLYFIFFIVFGSFFILKLFV). Topologically, residues 1109 to 1171 (CILIDIFRQQ…LMYDISVNRK (63 aa)) are cytoplasmic. Residues 1133 to 1146 (QLIYRRAVMRTMSA) form a linker region that may regulate channel inactivation region. Residues 1172–1189 (FEYTMMILIILNVAVMAI) form a helical membrane-spanning segment. The Extracellular segment spans residues 1190–1200 (DHYGQSMEFSE). A helical transmembrane segment spans residues 1201–1219 (VLDYLNLIFIIIFFVECVI). Over 1220 to 1231 (KVSGLRHHYFKD) the chain is Cytoplasmic. Residues 1232–1249 (PWNIIDFLYVVLAIAGLM) traverse the membrane as a helical segment. The Extracellular segment spans residues 1250–1262 (LSDVIEKYFISPT). A helical transmembrane segment spans residues 1263-1279 (LLRILRILRVGRLLRYF). Residues 1280–1298 (QSARGMRLLLLALRKALRT) are Cytoplasmic-facing. The chain crosses the membrane as a helical span at residues 1299–1316 (LFNVSFLLFVIMFVYAVF). Residues 1317-1338 (GMEFFMHIRDAGAIDDVYNFKT) are Extracellular-facing. The pore-forming intramembrane region spans 1339-1361 (FGQSIILLFQLATSAGWDGVYFA). Tetrodotoxin-binding residues include G1354 and D1356. Saxitoxin is bound at residue D1356. Over 1362-1387 (IANEEDCRAPDHELGYPGNCGSRALG) the chain is Extracellular. C1368 and C1381 are joined by a disulfide. A helical membrane pass occupies residues 1388–1410 (IAYLVSYLIITCLVVINMYAAVI). The Cytoplasmic segment spans residues 1411-1553 (LDYVLEVYED…NAWRKHKQQN (143 aa)).

It belongs to the sodium channel (TC 1.A.1.10) family. As to expression, detected in adult nerve cord, muscle, gut and mushroom-shaped accessory glands.

The protein localises to the cell membrane. With respect to regulation, inhibited by the pore blockers saxitoxin and tetrodotoxin. In terms of biological role, mediates the voltage-dependent sodium ion permeability of excitable membranes. This is Sodium channel protein PaFPC1 from Periplaneta americana (American cockroach).